Consider the following 216-residue polypeptide: Adenylate kinase (216 aa).

10–15 is an ATP binding site; it reads GAGKGT. The interval 30-59 is NMP; sequence STGDIFRKNISNKTPLGMEAKSYMDKGQLV. AMP-binding positions include Thr-31, Arg-36, 57–59, 85–88, and Gln-92; these read QLV and GFPR. Residues 126 to 163 are LID; sequence GRRVCGECGASYHIKFITPKTEGVCDLCGGKLVQRKDD. Arg-127 lines the ATP pocket. Residues Cys-130 and Cys-133 each coordinate Zn(2+). Position 136–137 (136–137) interacts with ATP; sequence SY. The Zn(2+) site is built by Cys-150 and Cys-153. Positions 160 and 171 each coordinate AMP. Lys-199 contributes to the ATP binding site.

This sequence belongs to the adenylate kinase family. In terms of assembly, monomer.

It localises to the cytoplasm. The enzyme catalyses AMP + ATP = 2 ADP. The protein operates within purine metabolism; AMP biosynthesis via salvage pathway; AMP from ADP: step 1/1. Functionally, catalyzes the reversible transfer of the terminal phosphate group between ATP and AMP. Plays an important role in cellular energy homeostasis and in adenine nucleotide metabolism. This is Adenylate kinase from Clostridium tetani (strain Massachusetts / E88).